The primary structure comprises 353 residues: UPF0283 membrane protein YcjF (353 aa).

A run of 3 helical transmembrane segments spans residues 70–90 (MVMG…VQWT), 100–120 (VALG…GSVV), and 213–233 (ESTL…FIAW).

This sequence belongs to the UPF0283 family.

It is found in the cell inner membrane. The sequence is that of UPF0283 membrane protein YcjF from Escherichia coli O139:H28 (strain E24377A / ETEC).